The following is a 150-amino-acid chain: 3-dehydroquinate dehydratase (150 aa).

The Proton acceptor role is filled by Tyr26. The substrate site is built by Asn77, His83, and Asp90. The active-site Proton donor is His103. Substrate-binding positions include 104 to 105 (LS) and Arg114.

Belongs to the type-II 3-dehydroquinase family. Homododecamer.

It catalyses the reaction 3-dehydroquinate = 3-dehydroshikimate + H2O. It participates in metabolic intermediate biosynthesis; chorismate biosynthesis; chorismate from D-erythrose 4-phosphate and phosphoenolpyruvate: step 3/7. Catalyzes a trans-dehydration via an enolate intermediate. This is 3-dehydroquinate dehydratase from Pectobacterium atrosepticum (strain SCRI 1043 / ATCC BAA-672) (Erwinia carotovora subsp. atroseptica).